The sequence spans 281 residues: MKTETTIQGLTASLNPARTTRKIIGFVPTMGNLHQGHLNLVREAKKLCDIVVVSIFVNPIQFGEGEDFENYPRTLEQDSHLLADVGCDIIFAPSVEQMYGKHPRLTNISVADITDDLCGQSRPGHFDGVAVVVTKLFNIVQPNVAFFGQKDYQQLAVIRQLVQDLNLPIDIIGVPIARDHDGLALSSRNGYLSEAERQIAPTIYQSLKLAEQQLHQGVELVDVLDELKFRLTAAGFVVDYVEARQPNLQPIAQFDRDLVLFVAAKLGKTRLIDNLQVKLKA.

An ATP-binding site is contributed by 30–37 (MGNLHQGH). H37 serves as the catalytic Proton donor. Q61 is a (R)-pantoate binding site. Residue Q61 participates in beta-alanine binding. 148–151 (GQKD) provides a ligand contact to ATP. Q154 is a (R)-pantoate binding site. ATP contacts are provided by residues A177 and 185 to 188 (LSSR).

The protein belongs to the pantothenate synthetase family. As to quaternary structure, homodimer.

Its subcellular location is the cytoplasm. It carries out the reaction (R)-pantoate + beta-alanine + ATP = (R)-pantothenate + AMP + diphosphate + H(+). The protein operates within cofactor biosynthesis; (R)-pantothenate biosynthesis; (R)-pantothenate from (R)-pantoate and beta-alanine: step 1/1. In terms of biological role, catalyzes the condensation of pantoate with beta-alanine in an ATP-dependent reaction via a pantoyl-adenylate intermediate. This Acinetobacter baylyi (strain ATCC 33305 / BD413 / ADP1) protein is Pantothenate synthetase.